Consider the following 185-residue polypeptide: Ribosome-recycling factor (185 aa).

The protein belongs to the RRF family.

The protein resides in the cytoplasm. In terms of biological role, responsible for the release of ribosomes from messenger RNA at the termination of protein biosynthesis. May increase the efficiency of translation by recycling ribosomes from one round of translation to another. The protein is Ribosome-recycling factor of Alcanivorax borkumensis (strain ATCC 700651 / DSM 11573 / NCIMB 13689 / SK2).